The primary structure comprises 426 residues: Serine/threonine-protein kinase ssn3 (426 aa).

The Protein kinase domain maps to 41-368; sequence YHIVGFISSG…AREALEHPYF (328 aa). ATP-binding positions include 47–55 and Lys71; that span reads ISSGTYGRV. Asp173 acts as the Proton acceptor in catalysis. The disordered stretch occupies residues 390-426; the sequence is RVTQDDNDIRSGSLPGTKRSGLPDDSLMGRAAKRLKE.

Belongs to the protein kinase superfamily. CMGC Ser/Thr protein kinase family. CDC2/CDKX subfamily. As to quaternary structure, component of the srb8-11 complex, a regulatory module of the Mediator complex. Requires Mg(2+) as cofactor.

It is found in the nucleus. The catalysed reaction is L-seryl-[protein] + ATP = O-phospho-L-seryl-[protein] + ADP + H(+). The enzyme catalyses L-threonyl-[protein] + ATP = O-phospho-L-threonyl-[protein] + ADP + H(+). It carries out the reaction [DNA-directed RNA polymerase] + ATP = phospho-[DNA-directed RNA polymerase] + ADP + H(+). Functionally, component of the srb8-11 complex. The srb8-11 complex is a regulatory module of the Mediator complex which is itself involved in regulation of basal and activated RNA polymerase II-dependent transcription. The srb8-11 complex may be involved in the transcriptional repression of a subset of genes regulated by Mediator. It may inhibit the association of the Mediator complex with RNA polymerase II to form the holoenzyme complex. The srb8-11 complex phosphorylates the C-terminal domain (CTD) of the largest subunit of RNA polymerase II. In Aspergillus fumigatus (strain ATCC MYA-4609 / CBS 101355 / FGSC A1100 / Af293) (Neosartorya fumigata), this protein is Serine/threonine-protein kinase ssn3 (ssn3).